The following is a 504-amino-acid chain: Putative glycerol-3-phosphate transporter 2 (504 aa).

Transmembrane regions (helical) follow at residues Leu31–Phe51, Ala84–Ala104, Phe116–Trp136, Phe145–Ala165, Met178–Ala198, Phe210–Val230, Ile280–Tyr302, Gly324–Ile344, Ala352–Phe372, Thr378–Ile398, Ala424–Ile444, and Val452–Ile472.

It belongs to the major facilitator superfamily. Organophosphate:Pi antiporter (OPA) (TC 2.A.1.4) family. Expressed in the root-hair differentiation zone.

The protein resides in the membrane. This is Putative glycerol-3-phosphate transporter 2 from Arabidopsis thaliana (Mouse-ear cress).